The primary structure comprises 335 residues: Delta(7)-sterol 5(6)-desaturase erg3B (335 aa).

A run of 3 helical transmembrane segments spans residues 74–94, 113–133, and 152–172; these read IWAFGLLLYLTTASLSFALVF, IGQALRAMPVMAALTAPLFLA, and LYTYLQYPLFIAFTDFAIYWI. A Fatty acid hydroxylase domain is found at 160–284; it reads LFIAFTDFAI…FITFWDRIGG (125 aa). Residues 173 to 177 carry the Histidine box-1 motif; it reads HRGLH. A Histidine box-2 motif is present at residues 186 to 190; sequence HKPHH. The chain crosses the membrane as a helical span at residues 219–239; sequence PFLFPLQKAAYLGLFVFVTIW. Asn256 carries N-linked (GlcNAc...) asparagine glycosylation. The Histidine box-3 motif lies at 261–265; that stretch reads HTIHH.

Belongs to the sterol desaturase family. It depends on Fe cation as a cofactor.

The protein resides in the endoplasmic reticulum membrane. It functions in the pathway steroid metabolism; ergosterol biosynthesis. Its function is as follows. Delta(7)-sterol 5(6)-desaturase; part of the third module of ergosterol biosynthesis pathway that includes the late steps of the pathway. Erg3B catalyzes the introduction of a C-5 double bond in the B ring to produce 5-dehydroepisterol. The third module or late pathway involves the ergosterol synthesis itself through consecutive reactions that mainly occur in the endoplasmic reticulum (ER) membrane. Firstly, the squalene synthase erg9 catalyzes the condensation of 2 farnesyl pyrophosphate moieties to form squalene, which is the precursor of all steroids. Squalene synthase is crucial for balancing the incorporation of farnesyl diphosphate (FPP) into sterol and nonsterol isoprene synthesis. Secondly, squalene is converted into lanosterol by the consecutive action of the squalene epoxidase erg1 and the lanosterol synthase erg7. Then, the delta(24)-sterol C-methyltransferase erg6 methylates lanosterol at C-24 to produce eburicol. Eburicol is the substrate of the sterol 14-alpha demethylase encoded by cyp51A and cyp51B, to yield 4,4,24-trimethyl ergosta-8,14,24(28)-trienol. The C-14 reductase erg24 then reduces the C14=C15 double bond which leads to 4,4-dimethylfecosterol. A sequence of further demethylations at C-4, involving the C-4 demethylation complex containing the C-4 methylsterol oxidases erg25A or erg25B, the sterol-4-alpha-carboxylate 3-dehydrogenase erg26 and the 3-keto-steroid reductase erg27, leads to the production of fecosterol via 4-methylfecosterol. The C-8 sterol isomerase erg2 then catalyzes the reaction which results in unsaturation at C-7 in the B ring of sterols and thus converts fecosterol to episterol. The sterol-C5-desaturase erg3B then catalyzes the introduction of a C-5 double bond in the B ring to produce 5-dehydroepisterol. The 2 other sterol-C5-desaturases, erg3A and erg3C, seem to be less important in ergosterol biosynthesis. The C-22 sterol desaturase erg5 further converts 5-dehydroepisterol into ergosta-5,7,22,24(28)-tetraen-3beta-ol by forming the C-22(23) double bond in the sterol side chain. Finally, ergosta-5,7,22,24(28)-tetraen-3beta-ol is substrate of the C-24(28) sterol reductases erg4A and erg4B to produce ergosterol. Possible alternative sterol biosynthetic pathways might exist from fecosterol to ergosterol, depending on the activities of the erg3 isoforms. This chain is Delta(7)-sterol 5(6)-desaturase erg3B, found in Aspergillus fumigatus (strain ATCC MYA-4609 / CBS 101355 / FGSC A1100 / Af293) (Neosartorya fumigata).